The sequence spans 254 residues: Matrix protein (254 aa).

The interaction with M2-1 stretch occupies residues 1 to 110 (MESYLVDTYQ…KLEFDKLTVC (110 aa)). The nuclear targeting and binding to host importin KPNB1 stretch occupies residues 110 to 183 (CEVKTVYLTT…SATVEAAISS (74 aa)). A Nuclear export signal motif is present at residues 194–206 (IAPYAGLIMIMTM). Phosphothreonine is present on threonine 205.

The protein belongs to the pneumovirinae M protein family. Forms dimers. Forms higher-order oligomers. Interacts with glycoprotein G (via N-terminus). Interacts with protein M2-1; this interaction directs the matrix protein localization to cytoplasmic inclusions comprising viral proteins L, N, P, and M2-1 and mediates the matrix protein association with the nucleocapsid. Post-translationally, phosphorylation is important for oligomerization.

It localises to the virion. The protein resides in the host cytoplasm. The protein localises to the host nucleus. Its subcellular location is the host cell membrane. Functionally, plays a crucial role in virus assembly into filaments and budding. Early in infection, localizes in the nucleus where it may inhibit host cell transcription. Later in infection, traffics to the cytoplasm through the action of host CRM1 to associate with inclusion bodies, the site of viral transcription and replication. During virus assembly and budding, acts as a bridge between the nucleocapsid and the lipid bilayer. This is Matrix protein (M) from Homo sapiens (Human).